Here is a 92-residue protein sequence, read N- to C-terminus: Small ribosomal subunit protein uS19 (92 aa).

The protein belongs to the universal ribosomal protein uS19 family.

In terms of biological role, protein S19 forms a complex with S13 that binds strongly to the 16S ribosomal RNA. This chain is Small ribosomal subunit protein uS19, found in Gloeobacter violaceus (strain ATCC 29082 / PCC 7421).